Here is a 447-residue protein sequence, read N- to C-terminus: MATDLQVTTNKLSNKETQLTVKVPVEKIQNKVEGRIRQVAKTAKIDGFRKGNVPMSHIRSQYGAGIQQEVINDVIRDTVFEAIKSEDIRAVGMPNIDDVKLEDDFLVYQATVEIFPEVDVQGINEIEVERHTAKVDEADVDTMIENLQKQREEFVEKKGKADKGNQVTFDFEGSIDGEKFEGGSAEDFKLVIGSNQMIPGFEAGIKGMKAGEEKTIDVTFPEDYQAENLAGKEAQFKINVKLVEKSKLPEIDDAFLELFGVKEGGVEKLKDDVRKNMEREIKNAARSQVKQATFDALLEKNEFDVPNAMLEQEIERQRNMMMQRFSQQFGANADSFDKDMLPNELFEEQALRAARLGIIVARVIDTKGLEVDQARVETFIKEAAENYEDPSEVIEYYTTDKQQRANIESVVLEDQVVDYLIEQGKVTDKEVSYQDLLAAQQQQQQAM.

Residues 164–249 form the PPIase FKBP-type domain; the sequence is GNQVTFDFEG…VKLVEKSKLP (86 aa).

The protein belongs to the FKBP-type PPIase family. Tig subfamily.

It localises to the cytoplasm. It catalyses the reaction [protein]-peptidylproline (omega=180) = [protein]-peptidylproline (omega=0). Functionally, involved in protein export. Acts as a chaperone by maintaining the newly synthesized protein in an open conformation. Functions as a peptidyl-prolyl cis-trans isomerase. This Psychrobacter cryohalolentis (strain ATCC BAA-1226 / DSM 17306 / VKM B-2378 / K5) protein is Trigger factor.